The primary structure comprises 427 residues: Phosphatase PSR1 (427 aa).

S-palmitoyl cysteine attachment occurs at residues Cys-9 and Cys-10. Over residues 14-34 the composition is skewed to polar residues; it reads TTQSNSNSAYRQQQSSSLNKN. The disordered stretch occupies residues 14-223; that stretch reads TTQSNSNSAY…SNDADDEDDE (210 aa). Basic residues predominate over residues 35–48; the sequence is RSVKHSNTKSRTRG. The span at 49 to 80 shows a compositional bias: polar residues; sequence VHQTNSPPSKTNSAATFSSTERSTGKSGISTN. Basic and acidic residues predominate over residues 104–118; that stretch reads KVEKRISKDDLYEEK. At Ser-110 the chain carries Phosphoserine. Positions 119–130 are enriched in acidic residues; it reads YEVDEDEEIDDE. The span at 131-151 shows a compositional bias: basic and acidic residues; the sequence is DNRRSRGIVQEKGDAVKDTSR. A Glycyl lysine isopeptide (Lys-Gly) (interchain with G-Cter in ubiquitin) cross-link involves residue Lys-154. The span at 155–183 shows a compositional bias: low complexity; sequence QQQQQQQQSQPQPQPQSQSQSQSQSQSQQ. Residues 184 to 214 are compositionally biased toward polar residues; sequence RGPTVQVSSDHLIQDMNLSRVSSSSQASETS. The region spanning 253–411 is the FCP1 homology domain; the sequence is STKGKKCLIL…LDIIPLLEDL (159 aa).

In terms of assembly, interacts with WHI2.

Its subcellular location is the cell membrane. Has phosphatase activity in vitro. Involved in the response to sodium and lithium ion stress (but not to potassium or sorbitol stress) by inducing transcription of the sodium pump ENA1/PMR2. Acts through a calcineurin-independent pathway and is functionally redundant with PSR2. Also involved in the general stress response; acts together with WHI2 to activate stress response element (STRE)-mediated gene expression, possibly through dephosphorylation of MSN2. The sequence is that of Phosphatase PSR1 (PSR1) from Saccharomyces cerevisiae (strain ATCC 204508 / S288c) (Baker's yeast).